The primary structure comprises 100 residues: MHLSPQEKDKLLIVTAALLAERRLKRGLRLNHPEAVAWLSFLVIEGARDGQSVAELMAEGSTWLRRDQVMDGVPELIPEVQIEAVFTDGTKLVTLHDPIR.

The protein belongs to the urease gamma subunit family. In terms of assembly, heterotrimer of UreA (gamma), UreB (beta) and UreC (alpha) subunits. Three heterotrimers associate to form the active enzyme.

It localises to the cytoplasm. It carries out the reaction urea + 2 H2O + H(+) = hydrogencarbonate + 2 NH4(+). It functions in the pathway nitrogen metabolism; urea degradation; CO(2) and NH(3) from urea (urease route): step 1/1. This chain is Urease subunit gamma, found in Prochlorococcus marinus (strain MIT 9303).